The following is a 461-amino-acid chain: tRNA-2-methylthio-N(6)-dimethylallyladenosine synthase (461 aa).

One can recognise an MTTase N-terminal domain in the interval 18–134 (KHIYIQTLGC…LPDFISRIEK (117 aa)). [4Fe-4S] cluster-binding residues include C27, C63, C97, C172, C176, and C179. One can recognise a Radical SAM core domain in the interval 158-388 (CNGQVSSFVT…QALQEQHTLE (231 aa)). Residues 391–454 (KAMEGKQEDV…LHSLRGEMLC (64 aa)) enclose the TRAM domain.

It belongs to the methylthiotransferase family. MiaB subfamily. As to quaternary structure, monomer. It depends on [4Fe-4S] cluster as a cofactor.

Its subcellular location is the cytoplasm. It carries out the reaction N(6)-dimethylallyladenosine(37) in tRNA + (sulfur carrier)-SH + AH2 + 2 S-adenosyl-L-methionine = 2-methylsulfanyl-N(6)-dimethylallyladenosine(37) in tRNA + (sulfur carrier)-H + 5'-deoxyadenosine + L-methionine + A + S-adenosyl-L-homocysteine + 2 H(+). Catalyzes the methylthiolation of N6-(dimethylallyl)adenosine (i(6)A), leading to the formation of 2-methylthio-N6-(dimethylallyl)adenosine (ms(2)i(6)A) at position 37 in tRNAs that read codons beginning with uridine. The protein is tRNA-2-methylthio-N(6)-dimethylallyladenosine synthase of Syntrophus aciditrophicus (strain SB).